A 253-amino-acid polypeptide reads, in one-letter code: Imidazole glycerol phosphate synthase subunit HisF (253 aa).

Residues aspartate 11 and aspartate 130 contribute to the active site.

Belongs to the HisA/HisF family. In terms of assembly, heterodimer of HisH and HisF.

It localises to the cytoplasm. It carries out the reaction 5-[(5-phospho-1-deoxy-D-ribulos-1-ylimino)methylamino]-1-(5-phospho-beta-D-ribosyl)imidazole-4-carboxamide + L-glutamine = D-erythro-1-(imidazol-4-yl)glycerol 3-phosphate + 5-amino-1-(5-phospho-beta-D-ribosyl)imidazole-4-carboxamide + L-glutamate + H(+). It functions in the pathway amino-acid biosynthesis; L-histidine biosynthesis; L-histidine from 5-phospho-alpha-D-ribose 1-diphosphate: step 5/9. IGPS catalyzes the conversion of PRFAR and glutamine to IGP, AICAR and glutamate. The HisF subunit catalyzes the cyclization activity that produces IGP and AICAR from PRFAR using the ammonia provided by the HisH subunit. The polypeptide is Imidazole glycerol phosphate synthase subunit HisF (Geotalea uraniireducens (strain Rf4) (Geobacter uraniireducens)).